The sequence spans 85 residues: Large ribosomal subunit protein bL27 (85 aa).

A compositionally biased stretch (gly residues) spans 1–10 (MAQKKGGGST). The disordered stretch occupies residues 1-20 (MAQKKGGGSTRNGRDSQPKM).

It belongs to the bacterial ribosomal protein bL27 family.

This chain is Large ribosomal subunit protein bL27, found in Methylibium petroleiphilum (strain ATCC BAA-1232 / LMG 22953 / PM1).